Here is a 185-residue protein sequence, read N- to C-terminus: Elongation factor P (185 aa).

Belongs to the elongation factor P family.

The protein localises to the cytoplasm. Its pathway is protein biosynthesis; polypeptide chain elongation. Its function is as follows. Involved in peptide bond synthesis. Stimulates efficient translation and peptide-bond synthesis on native or reconstituted 70S ribosomes in vitro. Probably functions indirectly by altering the affinity of the ribosome for aminoacyl-tRNA, thus increasing their reactivity as acceptors for peptidyl transferase. The chain is Elongation factor P from Bacillus cereus (strain 03BB102).